We begin with the raw amino-acid sequence, 82 residues long: Small ribosomal subunit protein uS17 (82 aa).

It belongs to the universal ribosomal protein uS17 family. In terms of assembly, part of the 30S ribosomal subunit.

In terms of biological role, one of the primary rRNA binding proteins, it binds specifically to the 5'-end of 16S ribosomal RNA. The chain is Small ribosomal subunit protein uS17 from Rickettsia typhi (strain ATCC VR-144 / Wilmington).